Consider the following 272-residue polypeptide: PHD finger protein ALFIN-LIKE 6 (272 aa).

A compositionally biased stretch (gly residues) spans 1-23 (MEGGGGGGGGGGGGGGGGGGGGA). Disordered regions lie at residues 1–24 (MEGG…GGAP) and 162–218 (QAKE…DNTL). Positions 168-182 (PNSSSKSNKPSSKVQ) are enriched in low complexity. Over residues 183-200 (SKAESRSKSKLSAPKDEE) the composition is skewed to basic and acidic residues. A compositionally biased stretch (acidic residues) spans 201 to 214 (GSGDDEGEEEEDDH). The segment at 216-268 (NTLCGTCGTNDGKDEFWICCDNCEKWYHGKCVKITPARAEHIKQYKCPDCTNK) adopts a PHD-type zinc-finger fold.

The protein belongs to the Alfin family.

The protein resides in the nucleus. Functionally, histone-binding component that specifically recognizes H3 tails trimethylated on 'Lys-4' (H3K4me3), which mark transcription start sites of virtually all active genes. The protein is PHD finger protein ALFIN-LIKE 6 of Oryza sativa subsp. indica (Rice).